A 356-amino-acid polypeptide reads, in one-letter code: Tyrosine recombinase XerS (356 aa).

The 106-residue stretch at 16 to 121 folds into the Core-binding (CB) domain; it reads IMPWFVLDYY…ALSSLYKYLT (106 aa). The 186-residue stretch at 169-354 folds into the Tyr recombinase domain; the sequence is EFLDYVDCEY…VNDEQKNALD (186 aa). Active-site residues include Arg210, Lys234, His306, Arg309, and His332. Tyr341 functions as the O-(3'-phospho-DNA)-tyrosine intermediate in the catalytic mechanism.

This sequence belongs to the 'phage' integrase family. XerS subfamily.

The protein resides in the cytoplasm. FtsK is required for recombination. Its function is as follows. Site-specific tyrosine recombinase, which acts by catalyzing the cutting and rejoining of the recombining DNA molecules. Essential to convert dimers of the bacterial chromosome into monomers to permit their segregation at cell division. The chain is Tyrosine recombinase XerS from Streptococcus uberis (strain ATCC BAA-854 / 0140J).